The chain runs to 357 residues: 3'-hydroxy-N-methyl-(S)-coclaurine 4'-O-methyltransferase 2 (357 aa).

Position 226 (aspartate 226) interacts with S-adenosyl-L-methionine. The Proton acceptor role is filled by histidine 264.

Belongs to the class I-like SAM-binding methyltransferase superfamily. Cation-independent O-methyltransferase family. COMT subfamily. As to quaternary structure, homodimer. As to expression, expressed in roots, stems, leaves and flowers.

The enzyme catalyses (S)-3'-hydroxy-N-methylcoclaurine + S-adenosyl-L-methionine = (S)-reticuline + S-adenosyl-L-homocysteine + H(+). The protein operates within alkaloid biosynthesis; (S)-reticuline biosynthesis; (S)-reticuline from (S)-norcoclaurine: step 4/4. Involved in the biosynthesis of benzylisoquinoline alkaloids. Catalyzes the transfer of the methyl group to the 4'-hydroxyl group of 3'-hydroxy-N-methylcoclaurine to form reticuline. Can also use laudanosoline and, with a lower activity, 6-O-methylnorlaudanosoline and norlaudanosoline as substrates. Also involved in the papaverine biosynthesis. The chain is 3'-hydroxy-N-methyl-(S)-coclaurine 4'-O-methyltransferase 2 from Papaver somniferum (Opium poppy).